Reading from the N-terminus, the 334-residue chain is Anthranilate phosphoribosyltransferase (334 aa).

5-phospho-alpha-D-ribose 1-diphosphate-binding positions include Gly-79, 82–83 (GD), Ser-87, 89–92 (NIST), 107–115 (KAGNRSISS), and Ser-119. Gly-79 is a binding site for anthranilate. Ser-91 provides a ligand contact to Mg(2+). Asn-110 serves as a coordination point for anthranilate. Arg-165 provides a ligand contact to anthranilate. Positions 224 and 225 each coordinate Mg(2+).

Belongs to the anthranilate phosphoribosyltransferase family. In terms of assembly, homodimer. The cofactor is Mg(2+).

The enzyme catalyses N-(5-phospho-beta-D-ribosyl)anthranilate + diphosphate = 5-phospho-alpha-D-ribose 1-diphosphate + anthranilate. Its pathway is amino-acid biosynthesis; L-tryptophan biosynthesis; L-tryptophan from chorismate: step 2/5. Functionally, catalyzes the transfer of the phosphoribosyl group of 5-phosphorylribose-1-pyrophosphate (PRPP) to anthranilate to yield N-(5'-phosphoribosyl)-anthranilate (PRA). This chain is Anthranilate phosphoribosyltransferase, found in Streptococcus thermophilus (strain ATCC BAA-250 / LMG 18311).